The sequence spans 105 residues: uncharacterized protein (105 aa).

This is an uncharacterized protein from Homo sapiens (Human).